A 1420-amino-acid polypeptide reads, in one-letter code: DNA-directed RNA polymerase subunit beta' (1420 aa).

The Zn(2+) site is built by C72, C74, C87, and C90. 3 residues coordinate Mg(2+): D462, D464, and D466. Residues C816, C896, C903, and C906 each contribute to the Zn(2+) site.

Belongs to the RNA polymerase beta' chain family. As to quaternary structure, the RNAP catalytic core consists of 2 alpha, 1 beta, 1 beta' and 1 omega subunit. When a sigma factor is associated with the core the holoenzyme is formed, which can initiate transcription. It depends on Mg(2+) as a cofactor. The cofactor is Zn(2+).

The catalysed reaction is RNA(n) + a ribonucleoside 5'-triphosphate = RNA(n+1) + diphosphate. In terms of biological role, DNA-dependent RNA polymerase catalyzes the transcription of DNA into RNA using the four ribonucleoside triphosphates as substrates. The protein is DNA-directed RNA polymerase subunit beta' of Blochmanniella floridana.